Consider the following 255-residue polypeptide: tRNA (guanine-N(7)-)-methyltransferase (255 aa).

A disordered region spans residues 1-37; sequence MTAAASDPHNPRSSADDTASPRCESGQGSFFGRRKGH. S-adenosyl-L-methionine is bound by residues Glu-80, Glu-105, Asp-132, and Asp-154. Residue Asp-154 is part of the active site. Substrate contacts are provided by Lys-158 and Asp-190.

Belongs to the class I-like SAM-binding methyltransferase superfamily. TrmB family.

It catalyses the reaction guanosine(46) in tRNA + S-adenosyl-L-methionine = N(7)-methylguanosine(46) in tRNA + S-adenosyl-L-homocysteine. The protein operates within tRNA modification; N(7)-methylguanine-tRNA biosynthesis. In terms of biological role, catalyzes the formation of N(7)-methylguanine at position 46 (m7G46) in tRNA. The sequence is that of tRNA (guanine-N(7)-)-methyltransferase from Nitrobacter hamburgensis (strain DSM 10229 / NCIMB 13809 / X14).